A 301-amino-acid chain; its full sequence is Probable 5-dehydro-4-deoxyglucarate dehydratase (301 aa).

The protein belongs to the DapA family.

It carries out the reaction 5-dehydro-4-deoxy-D-glucarate + H(+) = 2,5-dioxopentanoate + CO2 + H2O. Its pathway is carbohydrate acid metabolism; D-glucarate degradation; 2,5-dioxopentanoate from D-glucarate: step 2/2. The sequence is that of Probable 5-dehydro-4-deoxyglucarate dehydratase from Rhizobium meliloti (strain 1021) (Ensifer meliloti).